The sequence spans 280 residues: Bifunctional protein FolD (280 aa).

NADP(+) contacts are provided by residues 164–166 (GRS), Ser-189, and Val-230.

It belongs to the tetrahydrofolate dehydrogenase/cyclohydrolase family. In terms of assembly, homodimer.

The enzyme catalyses (6R)-5,10-methylene-5,6,7,8-tetrahydrofolate + NADP(+) = (6R)-5,10-methenyltetrahydrofolate + NADPH. It catalyses the reaction (6R)-5,10-methenyltetrahydrofolate + H2O = (6R)-10-formyltetrahydrofolate + H(+). The protein operates within one-carbon metabolism; tetrahydrofolate interconversion. In terms of biological role, catalyzes the oxidation of 5,10-methylenetetrahydrofolate to 5,10-methenyltetrahydrofolate and then the hydrolysis of 5,10-methenyltetrahydrofolate to 10-formyltetrahydrofolate. In Geotalea daltonii (strain DSM 22248 / JCM 15807 / FRC-32) (Geobacter daltonii), this protein is Bifunctional protein FolD.